A 767-amino-acid chain; its full sequence is Bifunctional lysine-specific demethylase and histidyl-hydroxylase NO66 (767 aa).

Residues 21–324 (TVSQKQQREK…GRQEAHRQNS (304 aa)) form a disordered region. At Ser44 the chain carries Phosphoserine. Residues 46–71 (SDDDDEDDGEGEDDNDSNSDEDESGS) show a composition bias toward acidic residues. Low complexity predominate over residues 72–81 (ESDATSADDS). Acidic residues predominate over residues 82–98 (FSSDDNDDDDSGDEDGS). Composition is skewed to polar residues over residues 127 to 137 (YTINSENSSVE) and 177 to 199 (ESAT…TSKP). Ser214 carries the phosphoserine modification. The span at 262–279 (PSSSGASCPLPSKTSKQV) shows a compositional bias: polar residues. The span at 315–324 (GRQEAHRQNS) shows a compositional bias: basic and acidic residues. The JmjC domain occupies 420–565 (CSIRILNPST…NLLEKLMPMV (146 aa)). Residues His466, Asp468, and His531 each contribute to the Fe cation site.

Belongs to the ROX family. NO66 subfamily. Requires Fe(2+) as cofactor.

Its subcellular location is the nucleus. The catalysed reaction is N(6),N(6)-dimethyl-L-lysyl(36)-[histone H3] + 2 2-oxoglutarate + 2 O2 = L-lysyl(36)-[histone H3] + 2 formaldehyde + 2 succinate + 2 CO2. Oxygenase that can act as both a histone lysine demethylase and a ribosomal histidine hydroxylase. Specifically demethylates 'Lys-4' (H3K4me) and 'Lys-36' (H3K36me) of histone H3, thereby playing a central role in histone code. This Drosophila willistoni (Fruit fly) protein is Bifunctional lysine-specific demethylase and histidyl-hydroxylase NO66.